The primary structure comprises 316 residues: MTNEFHHITVLLHETVDQLAVKPDGIYVDATLGGAGHSEYLLSQLGDEGHLYAFDQDQTAIDNAKKRLAPYVERGMVTFIKDNFRHLKSRLQEAGVEEIDGICYDLGVSSPQLDQRERGFSYKQDAPLDMRMNREAALTAFEVVNHYSYQDLVRIFFKYGEDKFSKQIARKIEQARSVKPIETTTELAEIIKSAKPAKELKKKGHPAKQIFQAIRIEVNDELGAADESIQQAIDLLAVDGRIAVITFHSLEDRLTKQLFKEASTVDVPKGLPFIPDELQPKLELVSRKPILPSKEELESNNRAHSAKLRVARKIHK.

S-adenosyl-L-methionine-binding positions include 35–37 (AGH), D55, F84, D105, and Q112.

The protein belongs to the methyltransferase superfamily. RsmH family.

It is found in the cytoplasm. The catalysed reaction is cytidine(1402) in 16S rRNA + S-adenosyl-L-methionine = N(4)-methylcytidine(1402) in 16S rRNA + S-adenosyl-L-homocysteine + H(+). Specifically methylates the N4 position of cytidine in position 1402 (C1402) of 16S rRNA. The polypeptide is Ribosomal RNA small subunit methyltransferase H (Streptococcus sanguinis (strain SK36)).